Reading from the N-terminus, the 240-residue chain is tRNA pseudouridine synthase A (240 aa).

Aspartate 50 acts as the Nucleophile in catalysis. Residue tyrosine 109 coordinates substrate.

The protein belongs to the tRNA pseudouridine synthase TruA family. As to quaternary structure, homodimer.

The enzyme catalyses uridine(38/39/40) in tRNA = pseudouridine(38/39/40) in tRNA. In terms of biological role, formation of pseudouridine at positions 38, 39 and 40 in the anticodon stem and loop of transfer RNAs. The polypeptide is tRNA pseudouridine synthase A (Campylobacter jejuni subsp. jejuni serotype O:6 (strain 81116 / NCTC 11828)).